A 1038-amino-acid chain; its full sequence is Bone morphogenetic protein receptor type-2 (1038 aa).

The first 26 residues, 1 to 26, serve as a signal peptide directing secretion; it reads MTSSLHRPFRVPWLLWAVLLVSTTAA. Residues 27–150 are Extracellular-facing; it reads SQNQERLCAF…PPHSFNRDET (124 aa). Cystine bridges form between C34–C66, C60–C84, C94–C117, C99–C116, and C118–C123. A glycan (N-linked (GlcNAc...) asparagine) is linked at N55. N-linked (GlcNAc...) asparagine glycosylation is present at N110. An N-linked (GlcNAc...) asparagine glycan is attached at N126. A helical membrane pass occupies residues 151–171; it reads IIIALASVSVLAVLIVALCFG. The Cytoplasmic portion of the chain corresponds to 172–1038; it reads YRMLTGDRKQ…VSKDIGMNCL (867 aa). In terms of domain architecture, Protein kinase spans 203–504; that stretch reads LKLLELIGRG…QCAEERMAEL (302 aa). ATP contacts are provided by residues 209-217, K230, and 280-282; these read IGRGRYGAV and EYY. D333 functions as the Proton acceptor in the catalytic mechanism. ATP is bound by residues 337 to 338 and D351; that span reads RN. Phosphothreonine is present on T379. S586 is subject to Phosphoserine. Residues 593 to 626 are disordered; the sequence is QAQARIPSPETSVTSLSTNTTTTNTTGLTPSTGM. Low complexity predominate over residues 603–626; that stretch reads TSVTSLSTNTTTTNTTGLTPSTGM. Residues S680 and S681 each carry the phosphoserine modification. The disordered stretch occupies residues 746–769; sequence PKQQNLPKRPTSLPLNTKNSTKEP. At S843 the chain carries Phosphoserine. The span at 872–896 shows a compositional bias: basic and acidic residues; that stretch reads RREQQAGHDEGVLDRLVDRRERPLE. Residues 872–974 are disordered; sequence RREQQAGHDE…SGSGEKIKRR (103 aa). Polar residues-rich tracts occupy residues 909–924 and 937–964; these read PCSE…TSTA and RPNS…QDGK.

The protein belongs to the protein kinase superfamily. TKL Ser/Thr protein kinase family. TGFB receptor subfamily. Interacts with GDF5. Interacts with BMP4. Interacts with SCUBE3. Interacts with TSC22D1/TSC-22. Interacts with activin A/INHBA. Requires Mg(2+) as cofactor. Mn(2+) is required as a cofactor.

The protein resides in the cell membrane. The catalysed reaction is L-threonyl-[receptor-protein] + ATP = O-phospho-L-threonyl-[receptor-protein] + ADP + H(+). It carries out the reaction L-seryl-[receptor-protein] + ATP = O-phospho-L-seryl-[receptor-protein] + ADP + H(+). On ligand binding, forms a receptor complex consisting of two type II and two type I transmembrane serine/threonine kinases. Type II receptors phosphorylate and activate type I receptors which autophosphorylate, then bind and activate SMAD transcriptional regulators. Can also mediate signaling through the activation of the p38MAPK cascade. Binds to BMP7, BMP2 and, less efficiently, BMP4. Binding is weak but enhanced by the presence of type I receptors for BMPs. Mediates induction of adipogenesis by GDF6. Promotes signaling also by binding to activin A/INHBA. This Mus musculus (Mouse) protein is Bone morphogenetic protein receptor type-2 (Bmpr2).